Consider the following 56-residue polypeptide: Large ribosomal subunit protein bL32 (56 aa).

Residues 1–16 (MAVQKSKKSRSRRGMR) show a composition bias toward basic residues. Residues 1-38 (MAVQKSKKSRSRRGMRRSHDAVTPENLSVDPVSGETHR) form a disordered region.

The protein belongs to the bacterial ribosomal protein bL32 family.

The polypeptide is Large ribosomal subunit protein bL32 (Colwellia psychrerythraea (strain 34H / ATCC BAA-681) (Vibrio psychroerythus)).